The chain runs to 219 residues: Small ribosomal subunit protein eS1 (219 aa).

Belongs to the eukaryotic ribosomal protein eS1 family. In terms of assembly, component of the small ribosomal subunit. Mature ribosomes consist of a small (40S) and a large (60S) subunit. The 40S subunit contains about 33 different proteins and 1 molecule of RNA (18S). The 60S subunit contains about 49 different proteins and 3 molecules of RNA (25S, 5.8S and 5S).

Its subcellular location is the cytoplasm. This Guillardia theta (Cryptophyte) protein is Small ribosomal subunit protein eS1.